Here is a 263-residue protein sequence, read N- to C-terminus: Isoprenyl transferase (263 aa).

Aspartate 38 is an active-site residue. Residue aspartate 38 coordinates Mg(2+). Substrate is bound by residues 39-42 (GNRR), histidine 55, and 83-85 (STD). The active-site Proton acceptor is the asparagine 86. Residues phenylalanine 87, arginine 89, arginine 212, and 218–220 (RLS) contribute to the substrate site. Glutamate 231 contacts Mg(2+).

Belongs to the UPP synthase family. In terms of assembly, homodimer. Mg(2+) serves as cofactor.

In terms of biological role, catalyzes the condensation of isopentenyl diphosphate (IPP) with allylic pyrophosphates generating different type of terpenoids. The protein is Isoprenyl transferase of Thermus thermophilus (strain ATCC BAA-163 / DSM 7039 / HB27).